A 322-amino-acid polypeptide reads, in one-letter code: NADH-quinone oxidoreductase subunit H (322 aa).

8 helical membrane passes run 12-32 (VGKALIVLVGIVGAGAFMSFI), 79-99 (IFILAPIIAFTAFILAFAVVP), 111-131 (VGLLYILAIAGLAVYAVLFAG), 151-171 (LSYEVFLGLSLMGIVIQTGSF), 183-203 (LWNVVPQILGFITFLFAGVAV), 234-254 (FFVGEYIGIVLISSLIVTLFF), 262-282 (LPPFIWFALKTACFMVFFILL), and 301-321 (VCLPLTLVNMLITGAVVLINV).

It belongs to the complex I subunit 1 family. NDH-1 is composed of 14 different subunits. Subunits NuoA, H, J, K, L, M, N constitute the membrane sector of the complex.

The protein resides in the cell inner membrane. It carries out the reaction a quinone + NADH + 5 H(+)(in) = a quinol + NAD(+) + 4 H(+)(out). NDH-1 shuttles electrons from NADH, via FMN and iron-sulfur (Fe-S) centers, to quinones in the respiratory chain. The immediate electron acceptor for the enzyme in this species is believed to be ubiquinone. Couples the redox reaction to proton translocation (for every two electrons transferred, four hydrogen ions are translocated across the cytoplasmic membrane), and thus conserves the redox energy in a proton gradient. This subunit may bind ubiquinone. This is NADH-quinone oxidoreductase subunit H from Aeromonas salmonicida (strain A449).